The sequence spans 365 residues: tRNA/tmRNA (uracil-C(5))-methyltransferase (365 aa).

Gln189, Tyr217, Asn222, Glu238, and Asp298 together coordinate S-adenosyl-L-methionine. Residue Cys323 is the Nucleophile of the active site. Glu357 serves as the catalytic Proton acceptor.

This sequence belongs to the class I-like SAM-binding methyltransferase superfamily. RNA M5U methyltransferase family. TrmA subfamily.

It carries out the reaction uridine(54) in tRNA + S-adenosyl-L-methionine = 5-methyluridine(54) in tRNA + S-adenosyl-L-homocysteine + H(+). The catalysed reaction is uridine(341) in tmRNA + S-adenosyl-L-methionine = 5-methyluridine(341) in tmRNA + S-adenosyl-L-homocysteine + H(+). Functionally, dual-specificity methyltransferase that catalyzes the formation of 5-methyluridine at position 54 (m5U54) in all tRNAs, and that of position 341 (m5U341) in tmRNA (transfer-mRNA). The protein is tRNA/tmRNA (uracil-C(5))-methyltransferase of Shewanella baltica (strain OS185).